We begin with the raw amino-acid sequence, 527 residues long: MNVIFSLASFVKNMYNASLNQRNLISLPFNFMLNFAPVFIWLSIFKRAGLIPIRLRPDIHSKFAFFADQFLFGDYWHELTVQLPDNTSKLFFWSFISSSAFLLVFLICIPFAIWYYIYYIKHVNYNLLEWFANIFHYPCKRKQRPIQKRFRTIFIPFALPLFTFVILNIDHFFAYQSDANFTKTKDLLAWFSYVILHLTAPILTAVYLYVFQPPGTLKCFSFALGLQNIAGVLTHLLVPMASPWFTHLYGIDDTEHVNYTQEGFAAGLIRVDSHLGTHLNTKGFHMSPIVFGAVPSLHSAIAFQCFLFLVSRSTSLKHRFSNAGGFTMHNNDSSTFKLSEEDSEDEGDNSIPPTIGPNDLEMEPLGTVEPVDISNERSSSPSSSFTVSSNERSTGGGDGSIINSNGNKKPLQFVHLYDEDTNFTNKWIFKIVNDGFIPKFWAILYIILQWWATMYLDHHYRFDLFVGVLYAMTSFIIINWFVLQPKVLKKWIHIRLGDKVDTRNEARTFGMRVFCGTKMEWFFDPLA.

Over 1 to 24 (MNVIFSLASFVKNMYNASLNQRNL) the chain is Cytoplasmic. The chain crosses the membrane as a helical span at residues 25–45 (ISLPFNFMLNFAPVFIWLSIF). The Lumenal segment spans residues 46-99 (KRAGLIPIRLRPDIHSKFAFFADQFLFGDYWHELTVQLPDNTSKLFFWSFISSS). Residues 100–120 (AFLLVFLICIPFAIWYYIYYI) traverse the membrane as a helical segment. The Cytoplasmic segment spans residues 121 to 152 (KHVNYNLLEWFANIFHYPCKRKQRPIQKRFRT). Residues 153 to 173 (IFIPFALPLFTFVILNIDHFF) traverse the membrane as a helical segment. Over 174 to 190 (AYQSDANFTKTKDLLAW) the chain is Lumenal. A helical transmembrane segment spans residues 191–211 (FSYVILHLTAPILTAVYLYVF). Residues 212-219 (QPPGTLKC) are Cytoplasmic-facing. Residues 220–240 (FSFALGLQNIAGVLTHLLVPM) traverse the membrane as a helical segment. The Lumenal segment spans residues 241–288 (ASPWFTHLYGIDDTEHVNYTQEGFAAGLIRVDSHLGTHLNTKGFHMSP). Residues 289–309 (IVFGAVPSLHSAIAFQCFLFL) traverse the membrane as a helical segment. The Cytoplasmic portion of the chain corresponds to 310–435 (VSRSTSLKHR…KWIFKIVNDG (126 aa)). Residues 331–404 (NDSSTFKLSE…GGGDGSIINS (74 aa)) form a disordered region. Over residues 376–389 (ERSSSPSSSFTVSS) the composition is skewed to low complexity. Residues 436–456 (FIPKFWAILYIILQWWATMYL) form a helical membrane-spanning segment. At 457–461 (DHHYR) the chain is on the lumenal side. The helical transmembrane segment at 462 to 482 (FDLFVGVLYAMTSFIIINWFV) threads the bilayer. Residues 483-527 (LQPKVLKKWIHIRLGDKVDTRNEARTFGMRVFCGTKMEWFFDPLA) are Cytoplasmic-facing.

It localises to the golgi apparatus membrane. It catalyses the reaction an alpha-D-mannosyl-(1&lt;-&gt;6)-1D-myo-inositol-1-phospho-N-[(R)-2-hydroxy-very-long-chain fatty acyl]-(R)-4-hydroxysphingoid base + a 1,2-diacyl-sn-glycero-3-phospho-(1D-myo-inositol) = an alpha-D-mannosyl-6-(1D-myo-inositol phospho)-(1&lt;-&gt;6)-1D-myo-inositol-1-phospho-N-[(R)-2-hydroxy-very-long-chain fatty acyl]-(R)-4-hydroxysphingoid base + a 1,2-diacyl-sn-glycerol. It carries out the reaction a mannosylinositol-1-phospho-N-acyl-sphingoid base + a 1,2-diacyl-sn-glycero-3-phospho-(1D-myo-inositol) = an inositol phosphomannosylnositol-1-phospho-N-acylsphingoid base + a 1,2-diacyl-sn-glycerol. The enzyme catalyses a mannosylinositol-1-phospho-N-(2-hydroxyacyl)-4R-hydroxysphingoid base + a 1,2-diacyl-sn-glycero-3-phospho-(1D-myo-inositol) = an inositol phosphomannosylnositol-1-phospho-N-(2-hydroxyacyl)-4R-hydroxysphingoid base + a 1,2-diacyl-sn-glycerol. Its function is as follows. Catalyzes the addition of a phosphorylinositol group onto mannosyl phosphorylinositol ceramide (MIPC) to form mannosyl diphosphorylinositol ceramide (M(IP)2C), the major sphingolipid in membranes of S.cerevisiae. In Saccharomyces cerevisiae (strain ATCC 204508 / S288c) (Baker's yeast), this protein is Inositolphosphotransferase 1.